We begin with the raw amino-acid sequence, 241 residues long: Large ribosomal subunit protein uL3 (241 aa).

Disordered stretches follow at residues 140-168 (SHRS…HMGD) and 216-241 (APKP…EEGA). Q151 carries the post-translational modification N5-methylglutamine.

Belongs to the universal ribosomal protein uL3 family. In terms of assembly, part of the 50S ribosomal subunit. Forms a cluster with proteins L14 and L19. Post-translationally, methylated by PrmB.

In terms of biological role, one of the primary rRNA binding proteins, it binds directly near the 3'-end of the 23S rRNA, where it nucleates assembly of the 50S subunit. The polypeptide is Large ribosomal subunit protein uL3 (Xanthobacter autotrophicus (strain ATCC BAA-1158 / Py2)).